The sequence spans 143 residues: Large ribosomal subunit protein uL11 (143 aa).

Belongs to the universal ribosomal protein uL11 family. As to quaternary structure, part of the ribosomal stalk of the 50S ribosomal subunit. Interacts with L10 and the large rRNA to form the base of the stalk. L10 forms an elongated spine to which L12 dimers bind in a sequential fashion forming a multimeric L10(L12)X complex. One or more lysine residues are methylated.

Its function is as follows. Forms part of the ribosomal stalk which helps the ribosome interact with GTP-bound translation factors. The protein is Large ribosomal subunit protein uL11 of Pseudomonas savastanoi pv. phaseolicola (strain 1448A / Race 6) (Pseudomonas syringae pv. phaseolicola (strain 1448A / Race 6)).